Here is a 166-residue protein sequence, read N- to C-terminus: Interferon gamma (166 aa).

The first 23 residues, 1 to 23 (MNYTSFILAFQLCAILGSSTYYC), serve as a signal peptide directing secretion. Gln-24 is modified (pyrrolidone carboxylic acid). N-linked (GlcNAc...) asparagine glycans are attached at residues Asn-39 and Asn-106. Residues 147-166 (ANLRKRKRSQNPFRGRRALQ) are disordered. Residues 148 to 166 (NLRKRKRSQNPFRGRRALQ) show a composition bias toward basic residues.

This sequence belongs to the type II (or gamma) interferon family. As to quaternary structure, homodimer. Interacts with IFNGR1 (via extracellular domain); this interaction promotes IFNGR1 dimerization. As to expression, released primarily from activated T lymphocytes.

The protein localises to the secreted. In terms of biological role, type II interferon produced by immune cells such as T-cells and NK cells that plays crucial roles in antimicrobial, antiviral, and antitumor responses by activating effector immune cells and enhancing antigen presentation. Primarily signals through the JAK-STAT pathway after interaction with its receptor IFNGR1 to affect gene regulation. Upon IFNG binding, IFNGR1 intracellular domain opens out to allow association of downstream signaling components JAK2, JAK1 and STAT1, leading to STAT1 activation, nuclear translocation and transcription of IFNG-regulated genes. Many of the induced genes are transcription factors such as IRF1 that are able to further drive regulation of a next wave of transcription. Plays a role in class I antigen presentation pathway by inducing a replacement of catalytic proteasome subunits with immunoproteasome subunits. In turn, increases the quantity, quality, and repertoire of peptides for class I MHC loading. Increases the efficiency of peptide generation also by inducing the expression of activator PA28 that associates with the proteasome and alters its proteolytic cleavage preference. Up-regulates as well MHC II complexes on the cell surface by promoting expression of several key molecules such as cathepsins B/CTSB, H/CTSH, and L/CTSL. Participates in the regulation of hematopoietic stem cells during development and under homeostatic conditions by affecting their development, quiescence, and differentiation. This is Interferon gamma (IFNG) from Equus caballus (Horse).